The chain runs to 282 residues: Bifunctional protein FolD (282 aa).

NADP(+)-binding positions include 165 to 167 (NRS), Ser190, and Ile231.

Belongs to the tetrahydrofolate dehydrogenase/cyclohydrolase family. In terms of assembly, homodimer.

It catalyses the reaction (6R)-5,10-methylene-5,6,7,8-tetrahydrofolate + NADP(+) = (6R)-5,10-methenyltetrahydrofolate + NADPH. It carries out the reaction (6R)-5,10-methenyltetrahydrofolate + H2O = (6R)-10-formyltetrahydrofolate + H(+). It participates in one-carbon metabolism; tetrahydrofolate interconversion. Its function is as follows. Catalyzes the oxidation of 5,10-methylenetetrahydrofolate to 5,10-methenyltetrahydrofolate and then the hydrolysis of 5,10-methenyltetrahydrofolate to 10-formyltetrahydrofolate. This chain is Bifunctional protein FolD, found in Clostridium botulinum (strain Okra / Type B1).